Reading from the N-terminus, the 488-residue chain is Probable phenylalanine--tRNA ligase alpha subunit (488 aa).

Positions 1 to 146 are contains the major tRNA-Phe binding sites; that stretch reads MSIEQDILNL…KRKLVDINKK (146 aa). L-phenylalanine is bound by residues Thr-315, 363–365, and Tyr-403; that span reads QVE. Position 405 (Glu-405) interacts with Mg(2+). Phe-429 serves as a coordination point for L-phenylalanine.

This sequence belongs to the class-II aminoacyl-tRNA synthetase family. Phe-tRNA synthetase alpha subunit type 2 subfamily. As to quaternary structure, tetramer of two alpha and two beta subunits. Mg(2+) is required as a cofactor.

It localises to the cytoplasm. It catalyses the reaction tRNA(Phe) + L-phenylalanine + ATP = L-phenylalanyl-tRNA(Phe) + AMP + diphosphate + H(+). The polypeptide is Probable phenylalanine--tRNA ligase alpha subunit (Enterocytozoon bieneusi (strain H348) (Microsporidian parasite)).